The primary structure comprises 430 residues: MDSAITLWQFLLQLLQEPQNEHMICWTSNNGEFKLLQAEEVARLWGIRKNKPNMNYDKLSRALRYYYVKNIIKKVNGQKFVYKFVSYPEILKMDPLTVGRIEGDCEALNSIETSSSKDVEYGGKERPPQPGAKTSSRNDYIHSGLYSSFTLNSLNTSNKKLFKSIKIENPAEKLAEKKAQEPTPSVIKFVTTPAKKPPIEPVAAAFATSPSLSPSSEETIQALETLVSPTLPSLETPASISILATTFNPTPPVPSTPLPLKEPPRTPSPPLSSNPDIDTDIESVASQPMELPENLSLEPKNEDSALPEKDKTNNSSRSKKPKGLELTPALVVTGSDPSPLGILSPSLPTASLTPALFSQTPILLTPSPLLSSIHFWSTLSPFAPLSPARLQGANTLFQFPSVLNSHGPFTLSGLDGPSTPGPFSPDLQKT.

The ETS DNA-binding region spans isoleucine 5 to valine 85. Residues serine 116 to proline 127 show a composition bias toward basic and acidic residues. Residues serine 116 to asparagine 138 are disordered. A Glycyl lysine isopeptide (Lys-Gly) (interchain with G-Cter in SUMO2) cross-link involves residue lysine 166. Disordered regions lie at residues threonine 245–threonine 279 and proline 292–glutamate 325. Positions proline 249 to serine 272 are enriched in pro residues. Over residues proline 299–threonine 312 the composition is skewed to basic and acidic residues.

The protein belongs to the ETS family. As to quaternary structure, interacts with SIRT7. Lung and liver.

The protein localises to the nucleus. In terms of biological role, involved in both transcriptional activation and repression. Interaction with SIRT7 leads to recruitment and stabilization of SIRT7 at promoters, followed by deacetylation of histone H3 at 'Lys-18' (H3K18Ac) and subsequent transcription repression. Forms a ternary complex with the serum response factor (SRF). Requires DNA-bound SRF for ternary complex formation and makes extensive DNA contacts to the 5'side of SRF, but does not bind DNA autonomously. The polypeptide is ETS domain-containing protein Elk-4 (Elk4) (Mus musculus (Mouse)).